A 409-amino-acid chain; its full sequence is Galactosylgalactosylxylosylprotein 3-beta-glucuronosyltransferase S (409 aa).

The interval methionine 1 to valine 45 is disordered. Topologically, residues methionine 1 to arginine 53 are cytoplasmic. A Phosphoserine modification is found at serine 9. Threonine 11 carries the phosphothreonine modification. 2 positions are modified to phosphoserine: serine 12 and serine 32. The helical; Signal-anchor for type II membrane protein transmembrane segment at isoleucine 54–leucine 73 threads the bilayer. Residues serine 74–serine 409 are Lumenal-facing. Asparagine 102 and asparagine 223 each carry an N-linked (GlcNAc...) asparagine glycan. Position 235 (aspartate 235) interacts with Mn(2+). Glutamate 318 acts as the Proton acceptor in catalysis. An N-linked (GlcNAc...) asparagine glycan is attached at asparagine 338. The segment at glutamate 389–serine 409 is disordered. A compositionally biased stretch (basic and acidic residues) spans asparagine 398–serine 409.

Belongs to the glycosyltransferase 43 family. It depends on Mn(2+) as a cofactor.

It is found in the golgi apparatus membrane. It carries out the reaction 3-O-(beta-D-galactosyl-(1-&gt;3)-beta-D-galactosyl-(1-&gt;4)-beta-D-xylosyl)-L-seryl-[protein] + UDP-alpha-D-glucuronate = 3-O-(beta-D-GlcA-(1-&gt;3)-beta-D-Gal-(1-&gt;3)-beta-D-Gal-(1-&gt;4)-beta-D-Xyl)-L-seryl-[protein] + UDP + H(+). The protein operates within protein modification; protein glycosylation. Functionally, involved in the biosynthesis of L2/HNK-1 carbohydrate epitope on both glycolipids and glycoproteins. Enzyme has a broad specificity. The polypeptide is Galactosylgalactosylxylosylprotein 3-beta-glucuronosyltransferase S (GlcAT-S) (Drosophila melanogaster (Fruit fly)).